A 76-amino-acid chain; its full sequence is Beta-defensin 121 (76 aa).

Positions 1–15 (MKLLLLLLTVTLLLA) are cleaved as a signal peptide. 3 disulfides stabilise this stretch: Cys23/Cys50, Cys30/Cys44, and Cys34/Cys51.

Belongs to the beta-defensin family. In terms of tissue distribution, abundant expression in the male reproductive tract only.

The protein resides in the secreted. Its function is as follows. Has antibacterial activity. The protein is Beta-defensin 121 (DEFB121) of Macaca mulatta (Rhesus macaque).